The sequence spans 816 residues: Phenylalanine--tRNA ligase beta subunit (816 aa).

The 109-residue stretch at 40-148 (FEELAALKTG…EGMAHGQRFI (109 aa)) folds into the tRNA-binding domain. Residues 401–479 (KAVEVQRFSI…RIYGYDNVPT (79 aa)) form the B5 domain. Residues Asp457, Asp463, Glu466, and Glu467 each contribute to the Mg(2+) site. The FDX-ACB domain maps to 721–814 (PVYPAVKRDI…LTDRFGGSFR (94 aa)).

It belongs to the phenylalanyl-tRNA synthetase beta subunit family. Type 1 subfamily. Tetramer of two alpha and two beta subunits. The cofactor is Mg(2+).

It localises to the cytoplasm. It carries out the reaction tRNA(Phe) + L-phenylalanine + ATP = L-phenylalanyl-tRNA(Phe) + AMP + diphosphate + H(+). The sequence is that of Phenylalanine--tRNA ligase beta subunit from Desulfotalea psychrophila (strain LSv54 / DSM 12343).